The sequence spans 329 residues: tRNA pseudouridine synthase B (329 aa).

D42 (nucleophile) is an active-site residue.

Belongs to the pseudouridine synthase TruB family. Type 1 subfamily.

The enzyme catalyses uridine(55) in tRNA = pseudouridine(55) in tRNA. Responsible for synthesis of pseudouridine from uracil-55 in the psi GC loop of transfer RNAs. The protein is tRNA pseudouridine synthase B of Lactococcus lactis subsp. lactis (strain IL1403) (Streptococcus lactis).